The primary structure comprises 198 residues: MTQQYIVEPKKGLGLKLKKGQILKVVDVEGQQVADFVAYHAKDFYEHLDQGATIDANHSIHVKVNDHLYSNLYKPMLTLIEDTVGKHDLLLPACRPDMNRLLYGKQKDEFQDTCYDNMNRALEQFGVPKPHMHYPFAIFMNTVLDEKGNLSVETPLSNAGDYVRLRAEMDLIVAFSSCPIEKGKCNGDSVTSIRVEVS.

This is an uncharacterized protein from Bacillus subtilis (strain 168).